The chain runs to 277 residues: 4-hydroxy-3-methylbut-2-enyl diphosphate reductase (277 aa).

Cys12 is a binding site for [4Fe-4S] cluster. (2E)-4-hydroxy-3-methylbut-2-enyl diphosphate-binding residues include His36 and His70. The dimethylallyl diphosphate site is built by His36 and His70. Isopentenyl diphosphate contacts are provided by His36 and His70. Cys92 provides a ligand contact to [4Fe-4S] cluster. A (2E)-4-hydroxy-3-methylbut-2-enyl diphosphate-binding site is contributed by His120. His120 contacts dimethylallyl diphosphate. His120 contributes to the isopentenyl diphosphate binding site. Catalysis depends on Glu122, which acts as the Proton donor. Thr158 contacts (2E)-4-hydroxy-3-methylbut-2-enyl diphosphate. Cys186 contributes to the [4Fe-4S] cluster binding site. (2E)-4-hydroxy-3-methylbut-2-enyl diphosphate-binding residues include Ser214, Asn216, and Ser258. 3 residues coordinate dimethylallyl diphosphate: Ser214, Asn216, and Ser258. Ser214, Asn216, and Ser258 together coordinate isopentenyl diphosphate.

Belongs to the IspH family. The cofactor is [4Fe-4S] cluster.

The enzyme catalyses isopentenyl diphosphate + 2 oxidized [2Fe-2S]-[ferredoxin] + H2O = (2E)-4-hydroxy-3-methylbut-2-enyl diphosphate + 2 reduced [2Fe-2S]-[ferredoxin] + 2 H(+). It carries out the reaction dimethylallyl diphosphate + 2 oxidized [2Fe-2S]-[ferredoxin] + H2O = (2E)-4-hydroxy-3-methylbut-2-enyl diphosphate + 2 reduced [2Fe-2S]-[ferredoxin] + 2 H(+). It functions in the pathway isoprenoid biosynthesis; dimethylallyl diphosphate biosynthesis; dimethylallyl diphosphate from (2E)-4-hydroxy-3-methylbutenyl diphosphate: step 1/1. The protein operates within isoprenoid biosynthesis; isopentenyl diphosphate biosynthesis via DXP pathway; isopentenyl diphosphate from 1-deoxy-D-xylulose 5-phosphate: step 6/6. Catalyzes the conversion of 1-hydroxy-2-methyl-2-(E)-butenyl 4-diphosphate (HMBPP) into a mixture of isopentenyl diphosphate (IPP) and dimethylallyl diphosphate (DMAPP). Acts in the terminal step of the DOXP/MEP pathway for isoprenoid precursor biosynthesis. In Campylobacter jejuni subsp. doylei (strain ATCC BAA-1458 / RM4099 / 269.97), this protein is 4-hydroxy-3-methylbut-2-enyl diphosphate reductase.